The following is a 379-amino-acid chain: Cytochrome b (379 aa).

4 helical membrane passes run Phe34–Met54, Trp78–Ile99, Trp114–Leu134, and Phe179–Thr199. Heme b contacts are provided by His84 and His98. 2 residues coordinate heme b: His183 and His197. His202 is an a ubiquinone binding site. Transmembrane regions (helical) follow at residues Leu227–Ser247, Leu289–His309, Leu321–Ser341, and Phe348–Pro368.

It belongs to the cytochrome b family. As to quaternary structure, the cytochrome bc1 complex contains 11 subunits: 3 respiratory subunits (MT-CYB, CYC1 and UQCRFS1), 2 core proteins (UQCRC1 and UQCRC2) and 6 low-molecular weight proteins (UQCRH/QCR6, UQCRB/QCR7, UQCRQ/QCR8, UQCR10/QCR9, UQCR11/QCR10 and a cleavage product of UQCRFS1). This cytochrome bc1 complex then forms a dimer. Requires heme b as cofactor.

It is found in the mitochondrion inner membrane. Component of the ubiquinol-cytochrome c reductase complex (complex III or cytochrome b-c1 complex) that is part of the mitochondrial respiratory chain. The b-c1 complex mediates electron transfer from ubiquinol to cytochrome c. Contributes to the generation of a proton gradient across the mitochondrial membrane that is then used for ATP synthesis. This chain is Cytochrome b (MT-CYB), found in Rhea americana (Greater rhea).